Reading from the N-terminus, the 264-residue chain is 3-methyl-2-oxobutanoate hydroxymethyltransferase (264 aa).

Residues D45 and D84 each coordinate Mg(2+). 3-methyl-2-oxobutanoate-binding positions include 45–46, D84, and K112; that span reads DS. E114 is a binding site for Mg(2+). The Proton acceptor role is filled by E181.

It belongs to the PanB family. Homodecamer; pentamer of dimers. It depends on Mg(2+) as a cofactor.

It localises to the cytoplasm. The catalysed reaction is 3-methyl-2-oxobutanoate + (6R)-5,10-methylene-5,6,7,8-tetrahydrofolate + H2O = 2-dehydropantoate + (6S)-5,6,7,8-tetrahydrofolate. It participates in cofactor biosynthesis; (R)-pantothenate biosynthesis; (R)-pantoate from 3-methyl-2-oxobutanoate: step 1/2. Functionally, catalyzes the reversible reaction in which hydroxymethyl group from 5,10-methylenetetrahydrofolate is transferred onto alpha-ketoisovalerate to form ketopantoate. This chain is 3-methyl-2-oxobutanoate hydroxymethyltransferase, found in Shewanella putrefaciens (strain CN-32 / ATCC BAA-453).